Here is a 386-residue protein sequence, read N- to C-terminus: Ribonucleoside-diphosphate reductase subunit M2 (386 aa).

Over residues Met1–Ser24 the composition is skewed to polar residues. The interval Met1 to Ser36 is disordered. Ser6 is subject to Phosphoserine. Thr31 carries the phosphothreonine modification. Positions 135, 166, and 169 each coordinate Fe cation. The active site involves Tyr173. Fe cation-binding residues include Glu229, Glu263, and His266.

This sequence belongs to the ribonucleoside diphosphate reductase small chain family. Heterodimer of a large and a small subunit. Requires Fe cation as cofactor.

It is found in the cytoplasm. The enzyme catalyses a 2'-deoxyribonucleoside 5'-diphosphate + [thioredoxin]-disulfide + H2O = a ribonucleoside 5'-diphosphate + [thioredoxin]-dithiol. Functionally, provides the precursors necessary for DNA synthesis. Catalyzes the biosynthesis of deoxyribonucleotides from the corresponding ribonucleotides. This is Ribonucleoside-diphosphate reductase subunit M2 (rrm2) from Danio rerio (Zebrafish).